We begin with the raw amino-acid sequence, 315 residues long: Olfactory receptor 2V1 (315 aa).

At 1–31 the chain is on the extracellular side; sequence MGRWVNQSYTDGFFLLGIFSHSQTDLVLFSA. Asn6 is a glycosylation site (N-linked (GlcNAc...) asparagine). A helical transmembrane segment spans residues 32–52; it reads VMVVFTVALCGNVLLIFLIYL. Over 53–58 the chain is Cytoplasmic; the sequence is DAGLHT. The chain crosses the membrane as a helical span at residues 59–79; sequence PMYFFLSQLSLMDLMLVCNIV. Topologically, residues 80–99 are extracellular; it reads PKMAANFLSGRKSISFVGCG. Residues Cys98 and Cys180 are joined by a disulfide bond. A helical membrane pass occupies residues 100–120; the sequence is IQIGFFVSLVGSEGLLLGLMA. Residues 121-149 lie on the Cytoplasmic side of the membrane; sequence YDRYVAVSHPLHYPILMNQRVCLQITGSS. A helical membrane pass occupies residues 150 to 170; the sequence is WAFGIIDGVIQMVAAMGLPYC. Over 171-198 the chain is Extracellular; that stretch reads GSRSVDHFFCEVQALLKLACADTSLFDT. Residues 199 to 219 form a helical membrane-spanning segment; the sequence is LLFACCVFMLLLPFSIIMASY. Residues 220-238 are Cytoplasmic-facing; that stretch reads ACILGAVLRIRSAQAWKKA. A helical membrane pass occupies residues 239–259; it reads LATCSSHLTAVTLFYGAAMFM. Residues 260–272 are Extracellular-facing; sequence YLRPRRYRAPSHD. The chain crosses the membrane as a helical span at residues 273-293; the sequence is KVASIFYTVLTPMLNPLIYSL. Topologically, residues 294–315 are cytoplasmic; sequence RNGEVMGALRKGLDRCRIGSQH.

This sequence belongs to the G-protein coupled receptor 1 family.

The protein localises to the cell membrane. Its function is as follows. Odorant receptor. In Homo sapiens (Human), this protein is Olfactory receptor 2V1 (OR2V1).